We begin with the raw amino-acid sequence, 439 residues long: MLPFLKAPADAPLMTDKYEIDARYRYWRRHILLTIWLGYALFYFTRKSFNAAVPEILANGVLSRSDIGLLATLFYITYGVSKFVSGIVSDRSNARYFMGIGLIATGIINILFGFSTSLWAFAVLWVLNAFFQGWGSPVCARLLTAWYSRTERGGWWALWNTAHNVGGALIPIVMAAAALHYGWRAGMMIAGCMAIVVGIFLCWRLRDRPQALGLPAVGEWRHDALEIAQQQEGAGLTRKEILTKYVLLNPYIWLLSFCYVLVYVVRAAINDWGNLYMSETLGVDLVTANTAVTMFELGGFIGALVAGWGSDKLFNGNRGPMNLIFAAGILLSVGSLWLMPFASYVMQATCFFTIGFFVFGPQMLIGMAAAECSHKEAAGAATGFVGLFAYLGASLAGWPLAKVLDTWHWSGFFVVISIAAGISALLLLPFLNAQTPREA.

Residues 1–25 (MLPFLKAPADAPLMTDKYEIDARYR) lie on the Cytoplasmic side of the membrane. Residues 26 to 45 (YWRRHILLTIWLGYALFYFT) traverse the membrane as a helical segment. Topologically, residues 46 to 66 (RKSFNAAVPEILANGVLSRSD) are periplasmic. The chain crosses the membrane as a helical span at residues 67-87 (IGLLATLFYITYGVSKFVSGI). Residues 88–95 (VSDRSNAR) lie on the Cytoplasmic side of the membrane. A helical transmembrane segment spans residues 96–118 (YFMGIGLIATGIINILFGFSTSL). Residues 119–121 (WAF) are Periplasmic-facing. A helical membrane pass occupies residues 122-144 (AVLWVLNAFFQGWGSPVCARLLT). Topologically, residues 145-162 (AWYSRTERGGWWALWNTA) are cytoplasmic. A helical membrane pass occupies residues 163 to 183 (HNVGGALIPIVMAAAALHYGW). A topological domain (periplasmic) is located at residue arginine 184. Residues 185–205 (AGMMIAGCMAIVVGIFLCWRL) traverse the membrane as a helical segment. Residues 206–244 (RDRPQALGLPAVGEWRHDALEIAQQQEGAGLTRKEILTK) lie on the Cytoplasmic side of the membrane. A helical membrane pass occupies residues 245–265 (YVLLNPYIWLLSFCYVLVYVV). Over 266–289 (RAAINDWGNLYMSETLGVDLVTAN) the chain is Periplasmic. A helical membrane pass occupies residues 290–310 (TAVTMFELGGFIGALVAGWGS). The Cytoplasmic segment spans residues 311–322 (DKLFNGNRGPMN). A helical membrane pass occupies residues 323-343 (LIFAAGILLSVGSLWLMPFAS). Topologically, residues 344 to 349 (YVMQAT) are periplasmic. Residues 350–370 (CFFTIGFFVFGPQMLIGMAAA) traverse the membrane as a helical segment. Topologically, residues 371–379 (ECSHKEAAG) are cytoplasmic. Residues 380–400 (AATGFVGLFAYLGASLAGWPL) form a helical membrane-spanning segment. Over 401–410 (AKVLDTWHWS) the chain is Periplasmic. The chain crosses the membrane as a helical span at residues 411 to 431 (GFFVVISIAAGISALLLLPFL). Topologically, residues 432–439 (NAQTPREA) are cytoplasmic.

Belongs to the major facilitator superfamily. Organophosphate:Pi antiporter (OPA) (TC 2.A.1.4) family.

The protein localises to the cell inner membrane. Part of the UhpABC signaling cascade that controls the expression of the hexose phosphate transporter UhpT. UhpC senses external glucose-6-phosphate and interacts with the histidine kinase UhpB, leading to the stimulation of the autokinase activity of UhpB. The chain is Membrane sensor protein UhpC from Escherichia coli (strain K12).